The chain runs to 215 residues: LysM and putative peptidoglycan-binding domain-containing protein 2 (215 aa).

The segment at 1-40 (MADLSPAPALREGGPRAHRPSAPSPPPRSRSTSEPEEAEL) is disordered. Position 2 is an N-acetylalanine (Ala-2). 4 positions are modified to phosphoserine: Ser-5, Ser-24, Ser-33, and Ser-57. Residues 71 to 115 (VEHRVRAGDTLQGIALKYGVTMEQIKRANKLFTNDCIFLKKTLSI) enclose the LysM domain. Disordered stretches follow at residues 135-176 (ESET…EVSA) and 195-215 (RKLKEESRDEESPYAASLYHS). Residues 145–156 (QEEEPVVSEEEL) show a composition bias toward acidic residues. Residues 157–169 (PPPSPQDPDPKPA) show a composition bias toward pro residues. The segment covering 196–205 (KLKEESRDEE) has biased composition (basic and acidic residues).

This is LysM and putative peptidoglycan-binding domain-containing protein 2 (Lysmd2) from Mus musculus (Mouse).